A 655-amino-acid polypeptide reads, in one-letter code: MTECFLPPASSPSEHRRAEHGGGLARTPSSEEISPTKFPGLYRTGEPLPPHDILHEPPDIVSEDEKDHGKKKGKFKKKEKRTEGYAAFQEDSSGDEAESPSKIKRSKGIHVFKKPSFSKKKEKDFKIKEKPKEEKHKEDKHKEKKSKDLTAADVVKQWKEKKKKKKPTPEPESLPVDIPRLRPVFGIPLIEAAERTMIYDGIRLPLVFRECIDFIEQHGMKCEGIYRVSGIKSKVDELKAAYDREESPNLEDYEPYTVASLLKQYLRELPENVLTKDLMPRFEEACGKTTEGERLQECQRLLKELPECNFCLTSWLVVHMDHVIEQELETKMNIQNISIVLSPTVQISNRVLYVFFTHVQELFGGVQIKRVIKPLRWSNMATMPALPETQETIKEEIRRQEFLLNCLHRELQAGVKDLSKEERLWEVQRILTALKRKLREAKRQDCETKIAQEIASLSKEDVSKEEMTENEEEVLNILLAQENEILTEQEELVAMEQYLRRQIATEKEEIDRLRAEISEIQSRQQHGRSETEEYSSESESESEDEEELQYILEDLQRQNEELEIKNTHLNQAIHEEREAIIELRVQLRLLQKQRVKSEQLQEEEELGKQNVPSQLPRDNLPETKAPKDQPKALMEQMKPSPIKKTGKKLSSETLI.

A disordered region spans residues 1-153 (MTECFLPPAS…KKSKDLTAAD (153 aa)). Residues 52–68 (DILHEPPDIVSEDEKDH) show a composition bias toward basic and acidic residues. Residue 69 to 74 (GKKKGK) coordinates ATP. Basic residues-rich tracts occupy residues 69-79 (GKKKGKFKKKE) and 102-118 (KIKRSKGIHVFKKPSFS). Residues 102-119 (KIKRSKGIHVFKKPSFSK) form a nuclear localization signal region. Positions 119 to 150 (KKKEKDFKIKEKPKEEKHKEDKHKEKKSKDLT) are enriched in basic and acidic residues. A run of 2 repeats spans residues 133–137 (EEKHK) and 138–142 (EDKHK). The tract at residues 133 to 142 (EEKHKEDKHK) is 2 X 5 AA tandem repeats of E-[D/E]-K-H-K. Positions 149–214 (LTAADVVKQW…PLVFRECIDF (66 aa)) are mediates association with membranes and could form transmembrane domains. In terms of domain architecture, Rho-GAP spans 187–383 (IPLIEAAERT…PLRWSNMATM (197 aa)). Residues 398-495 (RRQEFLLNCL…LTEQEELVAM (98 aa)) form a mediates interaction with RALA and RALB region. 413-420 (AGVKDLSK) is an ATP binding site. The tract at residues 494-510 (AMEQYLRRQIATEKEEI) is required to maintain nuclear localization. Residues 496–655 (EQYLRRQIAT…GKKLSSETLI (160 aa)) are mediates interaction with REPS1 and REPS2. 2 disordered regions span residues 520–548 (IQSRQQHGRSETEEYSSESESESEDEEEL) and 600–655 (LQEE…ETLI). A compositionally biased stretch (acidic residues) spans 532-548 (EEYSSESESESEDEEEL). Positions 619–630 (NLPETKAPKDQP) are enriched in basic and acidic residues.

Interacts with the active, GTP-bound form of ralB and ralA.

Its subcellular location is the cell membrane. It localises to the cytoplasm. It is found in the cytosol. The protein localises to the cytoskeleton. The protein resides in the spindle pole. Its subcellular location is the nucleus. It localises to the mitochondrion. It is found in the cell projection. The protein localises to the lamellipodium. It carries out the reaction an S-substituted glutathione(in) + ATP + H2O = an S-substituted glutathione(out) + ADP + phosphate + H(+). It catalyses the reaction ATP + H2O + xenobioticSide 1 = ADP + phosphate + xenobioticSide 2.. The enzyme catalyses leukotriene C4(in) + ATP + H2O = leukotriene C4(out) + ADP + phosphate + H(+). In terms of biological role, multifunctional protein that functions as a downstream effector of ralA and ralB. As a GTPase-activating protein/GAP can inactivate CDC42 and RAC1 by stimulating their GTPase activity. As part of the Ral signaling pathway, may also regulate ligand-dependent EGF and insulin receptors-mediated endocytosis. During mitosis, may act as a scaffold protein in the phosphorylation of EPSIN/EPN1 by the mitotic kinase cyclin B-CDK1, preventing endocytosis during that phase of the cell cycle. During mitosis, also controls mitochondrial fission as an effector of ralA. Recruited to mitochondrion by ralA, acts as a scaffold to foster the mitotic kinase cyclin B-CDK1-mediated phosphorylation and activation of DNM1L. Acts on the cytoskeleton, to regulate pigment distribution and to regulate gastrulation. Its function is as follows. Could also function as a primary ATP-dependent active transporter for glutathione conjugates of electrophiles. May also actively catalyze the efflux of a wide range of substrates including xenobiotics like doxorubicin (DOX) contributing to cell multidrug resistance. The protein is RalA-binding protein 1-A (ralbp1-a) of Xenopus laevis (African clawed frog).